We begin with the raw amino-acid sequence, 103 residues long: Cobalt transport protein CbiN (103 aa).

The next 2 membrane-spanning stretches (helical) occupy residues 6 to 26 (VLTNVILLLLVVFITIIPFFV) and 68 to 88 (LLFALQAAIGAGVIGFGLGYL).

Belongs to the CbiN family. Forms an energy-coupling factor (ECF) transporter complex composed of an ATP-binding protein (A component, CbiO), a transmembrane protein (T component, CbiQ) and 2 possible substrate-capture proteins (S components, CbiM and CbiN) of unknown stoichimetry.

The protein localises to the cell membrane. The protein operates within cofactor biosynthesis; adenosylcobalamin biosynthesis. Functionally, part of the energy-coupling factor (ECF) transporter complex CbiMNOQ involved in cobalt import. The protein is Cobalt transport protein CbiN of Clostridium perfringens (strain 13 / Type A).